The following is a 210-amino-acid chain: Small ribosomal subunit protein uS3 (210 aa).

Residues I38 to R106 form the KH type-2 domain.

The protein belongs to the universal ribosomal protein uS3 family. As to quaternary structure, part of the 30S ribosomal subunit. Forms a tight complex with proteins S10 and S14.

Binds the lower part of the 30S subunit head. Binds mRNA in the 70S ribosome, positioning it for translation. The chain is Small ribosomal subunit protein uS3 from Pelobacter propionicus (strain DSM 2379 / NBRC 103807 / OttBd1).